Reading from the N-terminus, the 347-residue chain is Anthranilate phosphoribosyltransferase (347 aa).

5-phospho-alpha-D-ribose 1-diphosphate-binding positions include Gly-88, 91-92, Thr-96, 98-101, 116-124, and Ser-128; these read GD, NIST, and KHGNRSVSS. Gly-88 serves as a coordination point for anthranilate. Ser-100 lines the Mg(2+) pocket. An anthranilate-binding site is contributed by Asn-119. Arg-174 provides a ligand contact to anthranilate. Asp-232 and Glu-233 together coordinate Mg(2+).

Belongs to the anthranilate phosphoribosyltransferase family. As to quaternary structure, homodimer. Mg(2+) is required as a cofactor.

It catalyses the reaction N-(5-phospho-beta-D-ribosyl)anthranilate + diphosphate = 5-phospho-alpha-D-ribose 1-diphosphate + anthranilate. It participates in amino-acid biosynthesis; L-tryptophan biosynthesis; L-tryptophan from chorismate: step 2/5. Functionally, catalyzes the transfer of the phosphoribosyl group of 5-phosphorylribose-1-pyrophosphate (PRPP) to anthranilate to yield N-(5'-phosphoribosyl)-anthranilate (PRA). The sequence is that of Anthranilate phosphoribosyltransferase from Shewanella sp. (strain MR-4).